A 354-amino-acid polypeptide reads, in one-letter code: Selection and upkeep of intraepithelial T-cells protein 1 (354 aa).

The Ig-like V-type 1 domain occupies 23–141; sequence PSSEQFTVNS…EEAIAEVKVT (119 aa). Intrachain disulfides connect cysteine 49-cysteine 123 and cysteine 163-cysteine 217. An Ig-like C1-type 2 domain is found at 161 to 233; that stretch reads VECNSEGWFP…TGQEERTSIV (73 aa). The next 3 membrane-spanning stretches (helical) occupy residues 243–263, 283–303, and 326–346; these read SVWILILVAILAVLLFFIMMP, LIGIGIVFSSMCVIIGLTITL, and MTVMVWVLMVFITMLISLVYF.

This sequence belongs to the SKINT family. Expressed in the thymus and skin.

It localises to the membrane. In terms of biological role, may act by engaging a cell surface molecule on immature T-cells in the embryonic thymus. The protein is Selection and upkeep of intraepithelial T-cells protein 1 (SKINT1) of Macaca fascicularis (Crab-eating macaque).